Here is a 94-residue protein sequence, read N- to C-terminus: MKHDPQFRALTPKWHQGYRFQYEPAQKAHVVLYPEGMIKLNDSAALIGGLIDGKRTITAIIHELQQQFPNVPELGMDVDEFMEGTKKKNWIDLV.

This sequence belongs to the PqqD family. In terms of assembly, monomer. Interacts with PqqE.

It participates in cofactor biosynthesis; pyrroloquinoline quinone biosynthesis. Its function is as follows. Functions as a PqqA binding protein and presents PqqA to PqqE, in the pyrroloquinoline quinone (PQQ) biosynthetic pathway. This Pseudomonas savastanoi pv. phaseolicola (strain 1448A / Race 6) (Pseudomonas syringae pv. phaseolicola (strain 1448A / Race 6)) protein is PqqA binding protein.